Consider the following 406-residue polypeptide: UPF0754 membrane protein CYB_2931 (406 aa).

Helical transmembrane passes span 1 to 21 (MAFW…YFTN) and 385 to 405 (IVNL…LFLL).

It belongs to the UPF0754 family.

The protein localises to the cell inner membrane. The chain is UPF0754 membrane protein CYB_2931 from Synechococcus sp. (strain JA-2-3B'a(2-13)) (Cyanobacteria bacterium Yellowstone B-Prime).